A 480-amino-acid polypeptide reads, in one-letter code: Ribosomal RNA small subunit methyltransferase F (480 aa).

Residues 126–132 (AAAPGSK), glutamate 150, aspartate 177, and aspartate 195 each bind S-adenosyl-L-methionine. Cysteine 248 serves as the catalytic Nucleophile.

This sequence belongs to the class I-like SAM-binding methyltransferase superfamily. RsmB/NOP family.

Its subcellular location is the cytoplasm. It catalyses the reaction cytidine(1407) in 16S rRNA + S-adenosyl-L-methionine = 5-methylcytidine(1407) in 16S rRNA + S-adenosyl-L-homocysteine + H(+). Specifically methylates the cytosine at position 1407 (m5C1407) of 16S rRNA. The protein is Ribosomal RNA small subunit methyltransferase F of Cronobacter sakazakii (strain ATCC BAA-894) (Enterobacter sakazakii).